Here is a 241-residue protein sequence, read N- to C-terminus: 1-(5-phosphoribosyl)-5-[(5-phosphoribosylamino)methylideneamino] imidazole-4-carboxamide isomerase (241 aa).

D8 acts as the Proton acceptor in catalysis. D130 (proton donor) is an active-site residue.

The protein belongs to the HisA/HisF family.

Its subcellular location is the cytoplasm. The catalysed reaction is 1-(5-phospho-beta-D-ribosyl)-5-[(5-phospho-beta-D-ribosylamino)methylideneamino]imidazole-4-carboxamide = 5-[(5-phospho-1-deoxy-D-ribulos-1-ylimino)methylamino]-1-(5-phospho-beta-D-ribosyl)imidazole-4-carboxamide. It functions in the pathway amino-acid biosynthesis; L-histidine biosynthesis; L-histidine from 5-phospho-alpha-D-ribose 1-diphosphate: step 4/9. This is 1-(5-phosphoribosyl)-5-[(5-phosphoribosylamino)methylideneamino] imidazole-4-carboxamide isomerase from Leptospira borgpetersenii serovar Hardjo-bovis (strain JB197).